A 256-amino-acid polypeptide reads, in one-letter code: MQWQDHAIILGVKRHGETSVIAEVMTRDRGRHLGLVRSGRSRAMQPVLQAGNAVEVIWRARLDEHLGEFRVEPVTLRAARLMETATAVYGVQAMGALLRLLPERDPHPHLFDALEVILDHLHNPADAGELFVRFELAVLNDLGFGLDLAECAATGARSDLVYVSPKSGRAVSRAAGAPWADKMLLLPPFLSIEGNHAADFDSLSAAFRLTGFFLHRHVYEPRGIEAVAARDGFVQAALKALNPTLRTLSGPNGVSA.

It belongs to the RecO family.

In terms of biological role, involved in DNA repair and RecF pathway recombination. The protein is DNA repair protein RecO of Rhizobium johnstonii (strain DSM 114642 / LMG 32736 / 3841) (Rhizobium leguminosarum bv. viciae).